Consider the following 533-residue polypeptide: Lanosterol 14-alpha demethylase (533 aa).

Cys472 serves as a coordination point for heme.

It belongs to the cytochrome P450 family. Requires heme as cofactor.

It is found in the membrane. It carries out the reaction a 14alpha-methyl steroid + 3 reduced [NADPH--hemoprotein reductase] + 3 O2 = a Delta(14) steroid + formate + 3 oxidized [NADPH--hemoprotein reductase] + 4 H2O + 4 H(+). The catalysed reaction is a 14alpha-methyl steroid + reduced [NADPH--hemoprotein reductase] + O2 = a 14alpha-hydroxymethyl steroid + oxidized [NADPH--hemoprotein reductase] + H2O + H(+). The enzyme catalyses a 14alpha-hydroxymethyl steroid + reduced [NADPH--hemoprotein reductase] + O2 = a 14alpha-formyl steroid + oxidized [NADPH--hemoprotein reductase] + 2 H2O + H(+). It catalyses the reaction a 14alpha-formyl steroid + reduced [NADPH--hemoprotein reductase] + O2 = a Delta(14) steroid + formate + oxidized [NADPH--hemoprotein reductase] + H2O + 2 H(+). It carries out the reaction lanosterol + 3 reduced [NADPH--hemoprotein reductase] + 3 O2 = 4,4-dimethyl-5alpha-cholesta-8,14,24-trien-3beta-ol + formate + 3 oxidized [NADPH--hemoprotein reductase] + 4 H2O + 4 H(+). The catalysed reaction is lanosterol + reduced [NADPH--hemoprotein reductase] + O2 = 32-hydroxylanosterol + oxidized [NADPH--hemoprotein reductase] + H2O + H(+). The enzyme catalyses 32-hydroxylanosterol + reduced [NADPH--hemoprotein reductase] + O2 = 32-oxolanosterol + oxidized [NADPH--hemoprotein reductase] + 2 H2O + H(+). It catalyses the reaction 32-oxolanosterol + reduced [NADPH--hemoprotein reductase] + O2 = 4,4-dimethyl-5alpha-cholesta-8,14,24-trien-3beta-ol + formate + oxidized [NADPH--hemoprotein reductase] + H2O + 2 H(+). It carries out the reaction eburicol + 3 reduced [NADPH--hemoprotein reductase] + 3 O2 = 14-demethyleburicol + formate + 3 oxidized [NADPH--hemoprotein reductase] + 4 H2O + 4 H(+). The catalysed reaction is eburicol + reduced [NADPH--hemoprotein reductase] + O2 = 32-hydroxyeburicol + oxidized [NADPH--hemoprotein reductase] + H2O + H(+). The enzyme catalyses 32-hydroxyeburicol + reduced [NADPH--hemoprotein reductase] + O2 = 32-oxoeburicol + oxidized [NADPH--hemoprotein reductase] + 2 H2O + H(+). It catalyses the reaction 32-oxoeburicol + reduced [NADPH--hemoprotein reductase] + O2 = 14-demethyleburicol + formate + oxidized [NADPH--hemoprotein reductase] + H2O + 2 H(+). It participates in steroid biosynthesis; zymosterol biosynthesis; zymosterol from lanosterol: step 1/6. In terms of biological role, sterol 14alpha-demethylase that plays a critical role in the third module of ergosterol biosynthesis pathway, being ergosterol the major sterol component in fungal membranes that participates in a variety of functions. The third module or late pathway involves the ergosterol synthesis itself through consecutive reactions that mainly occur in the endoplasmic reticulum (ER) membrane. In filamentous fungi, during the initial step of this module, lanosterol (lanosta-8,24-dien-3beta-ol) can be metabolized to eburicol. Sterol 14alpha-demethylase catalyzes the three-step oxidative removal of the 14alpha-methyl group (C-32) of both these sterols in the form of formate, and converts eburicol and lanosterol to 14-demethyleburicol (4,4,24-trimethylergosta-8,14,24(28)-trienol) and 4,4-dimethyl-5alpha-cholesta-8,14,24-trien-3beta-ol, respectively, which are further metabolized by other enzymes in the pathway to ergosterol. Can also use substrates not intrinsic to fungi, such as 24,25-dihydrolanosterol (DHL), producing 4,4-dimethyl-8,14-cholestadien-3-beta-ol, but at lower rates than the endogenous substrates. In Candida glabrata (strain ATCC 2001 / BCRC 20586 / JCM 3761 / NBRC 0622 / NRRL Y-65 / CBS 138) (Yeast), this protein is Lanosterol 14-alpha demethylase (ERG11).